The chain runs to 237 residues: Leucyl/phenylalanyl-tRNA--protein transferase (237 aa).

Belongs to the L/F-transferase family.

The protein resides in the cytoplasm. The catalysed reaction is N-terminal L-lysyl-[protein] + L-leucyl-tRNA(Leu) = N-terminal L-leucyl-L-lysyl-[protein] + tRNA(Leu) + H(+). It catalyses the reaction N-terminal L-arginyl-[protein] + L-leucyl-tRNA(Leu) = N-terminal L-leucyl-L-arginyl-[protein] + tRNA(Leu) + H(+). It carries out the reaction L-phenylalanyl-tRNA(Phe) + an N-terminal L-alpha-aminoacyl-[protein] = an N-terminal L-phenylalanyl-L-alpha-aminoacyl-[protein] + tRNA(Phe). Functionally, functions in the N-end rule pathway of protein degradation where it conjugates Leu, Phe and, less efficiently, Met from aminoacyl-tRNAs to the N-termini of proteins containing an N-terminal arginine or lysine. The polypeptide is Leucyl/phenylalanyl-tRNA--protein transferase (Aromatoleum aromaticum (strain DSM 19018 / LMG 30748 / EbN1) (Azoarcus sp. (strain EbN1))).